A 591-amino-acid chain; its full sequence is Guanylate-binding protein 2 (591 aa).

The interval 1 to 309 is GTPase domain (Globular); the sequence is MAPEINLPGP…NAISSGDLPC (309 aa). In terms of domain architecture, GB1/RHD3-type G spans 35–276; that stretch reads TQPVVVVAIV…FCSYILSHSN (242 aa). Residues 45–52, 181–182, and L245 each bind GTP; these read GLYRTGKS and RD. A Cysteine methyl ester modification is found at C588. A lipid anchor (S-geranylgeranyl cysteine) is attached at C588. The propeptide at 589-591 is removed in mature form; that stretch reads NIL.

Belongs to the TRAFAC class dynamin-like GTPase superfamily. GB1/RHD3 GTPase family. GB1 subfamily. Homodimer; homodimerization occurs upon GTP-binding and is required for the association with membranous structures. Heterodimer with other family members, including GBP1, GBP3, GBP4 and GBP5. (Microbial infection) Ubiquitinated by S.flexneri IpaH9.8, leading to its degradation by the proteasome, thereby preventing its ability to promote host defense against bacterial infection. In terms of processing, isoprenylation is required for proper subcellular location.

It is found in the cytoplasmic vesicle membrane. It localises to the golgi apparatus membrane. Its subcellular location is the cytoplasm. The protein localises to the perinuclear region. The catalysed reaction is GTP + H2O = GDP + phosphate + H(+). Interferon (IFN)-inducible GTPase that plays important roles in innate immunity against a diverse range of bacterial, viral and protozoan pathogens. Hydrolyzes GTP to GMP in 2 consecutive cleavage reactions, but the major reaction product is GDP. Following infection, recruited to the pathogen-containing vacuoles or vacuole-escaped bacteria and acts as a positive regulator of inflammasome assembly by promoting the release of inflammasome ligands from bacteria. Acts by promoting lysis of pathogen-containing vacuoles, releasing pathogens into the cytosol. Following pathogen release in the cytosol, promotes recruitment of proteins that mediate bacterial cytolysis: this liberates ligands that are detected by inflammasomes, such as lipopolysaccharide (LPS) that activates the non-canonical CASP4/CASP11 inflammasome or double-stranded DNA (dsDNA) that activates the AIM2 inflammasome. Confers protection to the protozoan pathogen Toxoplasma gondii. Independently of its GTPase activity, acts as an inhibitor of various viruses infectivity, such as HIV-1, Zika and influenza A viruses, by inhibiting FURIN-mediated maturation of viral envelope proteins. This chain is Guanylate-binding protein 2, found in Homo sapiens (Human).